The chain runs to 287 residues: 2-dehydro-3-deoxyphosphooctonate aldolase (287 aa).

Belongs to the KdsA family.

Its subcellular location is the cytoplasm. The enzyme catalyses D-arabinose 5-phosphate + phosphoenolpyruvate + H2O = 3-deoxy-alpha-D-manno-2-octulosonate-8-phosphate + phosphate. Its pathway is carbohydrate biosynthesis; 3-deoxy-D-manno-octulosonate biosynthesis; 3-deoxy-D-manno-octulosonate from D-ribulose 5-phosphate: step 2/3. It functions in the pathway bacterial outer membrane biogenesis; lipopolysaccharide biosynthesis. This chain is 2-dehydro-3-deoxyphosphooctonate aldolase, found in Leptospira interrogans serogroup Icterohaemorrhagiae serovar copenhageni (strain Fiocruz L1-130).